Reading from the N-terminus, the 867-residue chain is Envelope glycoprotein gp160 (867 aa).

Residues 1–31 form the signal peptide; that stretch reads MRVKGIRKNYQHLWRWGTMLLGILMICSAAE. Over 32 to 695 the chain is Extracellular; the sequence is QLWVTVYYGV…ITNWLWYIRI (664 aa). Cysteines 53 and 73 form a disulfide. N-linked (GlcNAc...) asparagine; by host glycans are attached at residues N87, N135, N140, N143, N159, N163, N188, N189, N199, N209, N246, N253, N274, N288, and N307. 5 disulfide bridges follow: C118/C217, C125/C208, C130/C160, C230/C259, and C240/C251. The V1 stretch occupies residues 130–159; it reads CIDWGNDTSPNATNTTSSGGEKMEKGEMKN. The segment at 160 to 208 is V2; sequence CSFNITTSIRDKVQKEHALFYKHDVVPINNSTKDNIKNDNSTRYRLISC. The segment at 308 to 341 is V3; it reads CTRPSKTTRRRIHIGPGRAFYTTKQIAGDLRQAH. A disulfide bond links C308 and C342. N-linked (GlcNAc...) asparagine; by host glycans are attached at residues N350, N366, and N372. A CD4-binding loop region spans residues 374 to 384; that stretch reads SSGGDPEIVMH. Cystine bridges form between C388-C457 and C395-C430. Positions 395 to 430 are V4; sequence CNSTQLFNSTWLSNSTWNDTEGSNNTGGNDTITLPC. Residues N396, N402, N408, N412, N418, N423, N460, and N475 are each glycosylated (N-linked (GlcNAc...) asparagine; by host). 2 V5 regions span residues 473–483 and 475–483; these read NQNETETFRPG and NETETFRPG. Positions 524–544 are fusion peptide; it reads AVGIGAVFLGFLGAAGSTMGA. Positions 585–603 are immunosuppression; that stretch reads KQLQARILAVERYLKDQQL. C609 and C615 are oxidised to a cystine. N-linked (GlcNAc...) asparagine; by host glycosylation is found at N622, N627, N636, and N648. Residues 644–678 adopt a coiled-coil conformation; the sequence is REIDNYTSLIYTLIEESQNQQEKNEQELLGLDKWA. The MPER; binding to GalCer stretch occupies residues 673–694; it reads GLDKWASLWNWFTITNWLWYIR. Residues 696–716 form a helical membrane-spanning segment; the sequence is FIMIVGGLVGLRIVFTVLSIV. The Cytoplasmic portion of the chain corresponds to 717–867; the sequence is NRVRQGYSPL…IRQGLERALL (151 aa). The short motif at 723–726 is the YXXL motif; contains endocytosis signal element; that stretch reads YSPL. Residues 730–755 are disordered; the sequence is TRLPAPRGPDRPEGIEEEGGDRDRDR. A lipid anchor (S-palmitoyl cysteine; by host) is attached at C775. The Di-leucine internalization motif motif lies at 866 to 867; that stretch reads LL.

This sequence belongs to the HIV-1 env protein family. In terms of assembly, the mature envelope protein (Env) consists of a homotrimer of non-covalently associated gp120-gp41 heterodimers. The resulting complex protrudes from the virus surface as a spike. There seems to be as few as 10 spikes on the average virion. Interacts with host CD4, CCR5 and CXCR4. Gp120 also interacts with the C-type lectins CD209/DC-SIGN and CLEC4M/DC-SIGNR (collectively referred to as DC-SIGN(R)). Gp120 and gp41 interact with GalCer. Gp120 interacts with host ITGA4/ITGB7 complex; on CD4+ T-cells, this interaction results in rapid activation of integrin ITGAL/LFA-1, which facilitates efficient cell-to-cell spreading of HIV-1. Gp120 interacts with cell-associated heparan sulfate; this interaction increases virus infectivity on permissive cells and may be involved in infection of CD4- cells. As to quaternary structure, the mature envelope protein (Env) consists of a homotrimer of non-covalently associated gp120-gp41 heterodimers. The resulting complex protrudes from the virus surface as a spike. There seems to be as few as 10 spikes on the average virion. In terms of processing, highly glycosylated by host. The high number of glycan on the protein is reffered to as 'glycan shield' because it contributes to hide protein sequence from adaptive immune system. Palmitoylation of the transmembrane protein and of Env polyprotein (prior to its proteolytic cleavage) is essential for their association with host cell membrane lipid rafts. Palmitoylation is therefore required for envelope trafficking to classical lipid rafts, but not for viral replication. Post-translationally, specific enzymatic cleavages in vivo yield mature proteins. Envelope glycoproteins are synthesized as an inactive precursor that is heavily N-glycosylated and processed likely by host cell furin in the Golgi to yield the mature SU and TM proteins. The cleavage site between SU and TM requires the minimal sequence [KR]-X-[KR]-R. About 2 of the 9 disulfide bonds of gp41 are reduced by P4HB/PDI, following binding to CD4 receptor.

It is found in the virion membrane. The protein resides in the host cell membrane. The protein localises to the host endosome membrane. Its function is as follows. Oligomerizes in the host endoplasmic reticulum into predominantly trimers. In a second time, gp160 transits in the host Golgi, where glycosylation is completed. The precursor is then proteolytically cleaved in the trans-Golgi and thereby activated by cellular furin or furin-like proteases to produce gp120 and gp41. In terms of biological role, attaches the virus to the host lymphoid cell by binding to the primary receptor CD4. This interaction induces a structural rearrangement creating a high affinity binding site for a chemokine coreceptor like CXCR4 and/or CCR5. Acts as a ligand for CD209/DC-SIGN and CLEC4M/DC-SIGNR, which are respectively found on dendritic cells (DCs), and on endothelial cells of liver sinusoids and lymph node sinuses. These interactions allow capture of viral particles at mucosal surfaces by these cells and subsequent transmission to permissive cells. HIV subverts the migration properties of dendritic cells to gain access to CD4+ T-cells in lymph nodes. Virus transmission to permissive T-cells occurs either in trans (without DCs infection, through viral capture and transmission), or in cis (following DCs productive infection, through the usual CD4-gp120 interaction), thereby inducing a robust infection. In trans infection, bound virions remain infectious over days and it is proposed that they are not degraded, but protected in non-lysosomal acidic organelles within the DCs close to the cell membrane thus contributing to the viral infectious potential during DCs' migration from the periphery to the lymphoid tissues. On arrival at lymphoid tissues, intact virions recycle back to DCs' cell surface allowing virus transmission to CD4+ T-cells. Functionally, acts as a class I viral fusion protein. Under the current model, the protein has at least 3 conformational states: pre-fusion native state, pre-hairpin intermediate state, and post-fusion hairpin state. During fusion of viral and target intracellular membranes, the coiled coil regions (heptad repeats) assume a trimer-of-hairpins structure, positioning the fusion peptide in close proximity to the C-terminal region of the ectodomain. The formation of this structure appears to drive apposition and subsequent fusion of viral and target cell membranes. Complete fusion occurs in host cell endosomes and is dynamin-dependent, however some lipid transfer might occur at the plasma membrane. The virus undergoes clathrin-dependent internalization long before endosomal fusion, thus minimizing the surface exposure of conserved viral epitopes during fusion and reducing the efficacy of inhibitors targeting these epitopes. Membranes fusion leads to delivery of the nucleocapsid into the cytoplasm. The protein is Envelope glycoprotein gp160 of Homo sapiens (Human).